A 352-amino-acid chain; its full sequence is DNA polymerase IV (352 aa).

In terms of domain architecture, UmuC spans 3–187 (VLFVDFDYFY…LDIADVPGIG (185 aa)). Mg(2+) contacts are provided by aspartate 7 and aspartate 105. The active site involves glutamate 106.

Belongs to the DNA polymerase type-Y family. Monomer. Interacts with the PCNA heterotrimer via PCNA1. Mg(2+) serves as cofactor.

The protein resides in the cytoplasm. It carries out the reaction DNA(n) + a 2'-deoxyribonucleoside 5'-triphosphate = DNA(n+1) + diphosphate. Its function is as follows. Poorly processive, error-prone DNA polymerase involved in untargeted mutagenesis. Copies undamaged DNA at stalled replication forks, which arise in vivo from mismatched or misaligned primer ends. These misaligned primers can be extended by PolIV. Exhibits no 3'-5' exonuclease (proofreading) activity. It is involved in translesional synthesis. The polypeptide is DNA polymerase IV (dbh) (Saccharolobus solfataricus (strain ATCC 35092 / DSM 1617 / JCM 11322 / P2) (Sulfolobus solfataricus)).